The sequence spans 266 residues: Glucosamine-6-phosphate deaminase (266 aa).

The active-site Proton acceptor; for enolization step is the Asp-72. The For ring-opening step role is filled by Asp-141. Residue His-143 is the Proton acceptor; for ring-opening step of the active site. Glu-148 serves as the catalytic For ring-opening step.

Belongs to the glucosamine/galactosamine-6-phosphate isomerase family. NagB subfamily. Homohexamer.

It catalyses the reaction alpha-D-glucosamine 6-phosphate + H2O = beta-D-fructose 6-phosphate + NH4(+). The protein operates within amino-sugar metabolism; N-acetylneuraminate degradation; D-fructose 6-phosphate from N-acetylneuraminate: step 5/5. Its activity is regulated as follows. Allosterically activated by N-acetylglucosamine 6-phosphate (GlcNAc6P). Catalyzes the reversible isomerization-deamination of glucosamine 6-phosphate (GlcN6P) to form fructose 6-phosphate (Fru6P) and ammonium ion. The polypeptide is Glucosamine-6-phosphate deaminase (Vibrio campbellii (strain ATCC BAA-1116)).